The primary structure comprises 196 residues: Cytochrome c biogenesis ATP-binding export protein CcmA (196 aa).

An ABC transporter domain is found at 2-195; it reads LSFHQLKFNI…HIKSAQILQL (194 aa). 34–41 is an ATP binding site; sequence GANGCGKT.

This sequence belongs to the ABC transporter superfamily. CcmA exporter (TC 3.A.1.107) family. The complex is composed of two ATP-binding proteins (CcmA) and two transmembrane proteins (CcmB).

It is found in the cell inner membrane. The enzyme catalyses heme b(in) + ATP + H2O = heme b(out) + ADP + phosphate + H(+). Part of the ABC transporter complex CcmAB involved in the biogenesis of c-type cytochromes; once thought to export heme, this seems not to be the case, but its exact role is uncertain. Responsible for energy coupling to the transport system. The sequence is that of Cytochrome c biogenesis ATP-binding export protein CcmA from Rickettsia bellii (strain RML369-C).